The primary structure comprises 835 residues: Replication origin-binding protein (835 aa).

The 162-residue stretch at 54-215 folds into the Helicase ATP-binding domain; that stretch reads PGMSQTRPVT…SGLRGDENIH (162 aa). 67-74 contributes to the ATP binding site; the sequence is APMGSGKT.

It belongs to the herpesviridae OriBP family. Homodimer. Interacts with the major DNA-binding protein. Interacts with the helicase/primase component 52 and the polymerase accessory protein.

The protein resides in the host nucleus. In terms of biological role, functions as a docking protein to recruit essential components of the viral replication machinery to viral DNA origins. In the presence of the major DNA-binding protein, opens dsDNA leading to a conformational change in the origin that facilitates DNA unwinding and subsequent replication. The polypeptide is Replication origin-binding protein (Homo sapiens (Human)).